Consider the following 121-residue polypeptide: Ribonuclease P protein component (121 aa).

This sequence belongs to the RnpA family. In terms of assembly, consists of a catalytic RNA component (M1 or rnpB) and a protein subunit.

It catalyses the reaction Endonucleolytic cleavage of RNA, removing 5'-extranucleotides from tRNA precursor.. RNaseP catalyzes the removal of the 5'-leader sequence from pre-tRNA to produce the mature 5'-terminus. It can also cleave other RNA substrates such as 4.5S RNA. The protein component plays an auxiliary but essential role in vivo by binding to the 5'-leader sequence and broadening the substrate specificity of the ribozyme. The protein is Ribonuclease P protein component of Coxiella burnetii (strain Dugway 5J108-111).